The following is a 188-amino-acid chain: MSIMSDNWIKKMAESENMISPFVDKQVRTHNNQHILSYGLSSYGYDARVSNEFKIFTNTKPSIIDPKKFDQDCLITKISDICIIPPNSFALGTTIEYFKMPRDVIAICIGKSTYARCGIIINVTPLEPECEGHITLEFSNTTPLPAKIYAGEGACQFLFLKGDQPCNTSYLDRYGRYTKQIGVTLPTV.

Residues 111–116 (KSTYAR), 135–137 (TLE), Q156, Y170, K179, and Q180 contribute to the dCTP site. E137 serves as the catalytic Proton donor/acceptor.

It belongs to the dCTP deaminase family. In terms of assembly, homotrimer.

It carries out the reaction dCTP + H2O + H(+) = dUTP + NH4(+). It participates in pyrimidine metabolism; dUMP biosynthesis; dUMP from dCTP (dUTP route): step 1/2. Catalyzes the deamination of dCTP to dUTP. The sequence is that of dCTP deaminase from Orientia tsutsugamushi (strain Ikeda) (Rickettsia tsutsugamushi).